Reading from the N-terminus, the 607-residue chain is UvrABC system protein C (607 aa).

One can recognise a GIY-YIG domain in the interval 16 to 94; sequence GRPGVYRMFD…IKEWRPPYNI (79 aa). The UVR domain maps to 203-238; the sequence is NALSEELSASMEKASMALEFERAAELRDQISMLRRV.

Belongs to the UvrC family. In terms of assembly, interacts with UvrB in an incision complex.

It localises to the cytoplasm. In terms of biological role, the UvrABC repair system catalyzes the recognition and processing of DNA lesions. UvrC both incises the 5' and 3' sides of the lesion. The N-terminal half is responsible for the 3' incision and the C-terminal half is responsible for the 5' incision. This Ectopseudomonas mendocina (strain ymp) (Pseudomonas mendocina) protein is UvrABC system protein C.